The primary structure comprises 1435 residues: Gag-Pol polyprotein (1435 aa).

Gly-2 is lipidated: N-myristoyl glycine; by host. Positions 7–31 (VLSGGKLDKWEKIRLRPGGKKKYRL) are interaction with Gp41. Residues 8–43 (LSGGKLDKWEKIRLRPGGKKKYRLKHIVWASRELER) are interaction with host CALM1. The tract at residues 12-19 (KLDKWEKI) is interaction with host AP3D1. The segment at 14–33 (DKWEKIRLRPGGKKKYRLKH) is interaction with membrane phosphatidylinositol 4,5-bisphosphate and RNA. Residues 16–22 (WEKIRLR) carry the Nuclear export signal motif. Residues 26–32 (KKKYRLK) carry the Nuclear localization signal motif. The tract at residues 73-77 (EELRS) is interaction with membrane phosphatidylinositol 4,5-bisphosphate. Positions 102 to 128 (EKMEEEQNKSKKKAQQAAADTGNNSQV) are disordered. Tyr-132 is subject to Phosphotyrosine; by host. Residues 189–227 (NTVGGHQAAMQMLKETINEEAAEWDRLHPVHAGPIAPGQ) form an interaction with human PPIA/CYPA and NUP153 region. The interval 277-363 (YSPVSILDIR…GGPSHKARVL (87 aa)) is dimerization/Multimerization of capsid protein p24. CCHC-type zinc fingers lie at residues 391 to 408 (IKCF…NCRA) and 412 to 429 (KGCW…DCTE). The tract at residues 489-493 (PQITL) is dimerization of protease. One can recognise a Peptidase A2 domain in the interval 508–577 (KEALLDTGAD…TPVNIIGRNL (70 aa)). Asp-513 serves as the catalytic For protease activity; shared with dimeric partner. Dimerization of protease regions lie at residues 537-543 (GIGGFIK) and 576-588 (NLLT…LNFP). The Reverse transcriptase domain maps to 631–821 (EGKISRIGPE…PPFLWMGYEL (191 aa)). Residues Asp-697, Asp-772, and Asp-773 each contribute to the Mg(2+) site. Residues 814 to 822 (FLWMGYELH) form an RT 'primer grip' region. The Tryptophan repeat motif motif lies at 985–1001 (WETWWAEYWQATWIPEW). The region spanning 1021 to 1144 (IIGAETFYVD…VDKLVSQGIR (124 aa)) is the RNase H type-1 domain. The Mg(2+) site is built by Asp-1030, Glu-1065, Asp-1085, and Asp-1136. The Integrase-type zinc finger occupies 1150-1191 (DGIDKAQEEHEKYHNNWRAMASDFNLPPVVAKEIVASCDKCQ). The Zn(2+) site is built by His-1159, His-1163, Cys-1187, and Cys-1190. An Integrase catalytic domain is found at 1201–1351 (VDCSPGIWQL…SAGERIIDII (151 aa)). Mg(2+) is bound by residues Asp-1211, Asp-1263, and Glu-1299. A DNA-binding region (integrase-type) is located at residues 1370 to 1417 (FRVYYRDSRDPIWKGPAKLLWKGEGAVVIQDKSDIKVVPRRKVKIIRD).

Homotrimer; further assembles as hexamers of trimers. Interacts with gp41 (via C-terminus). Interacts with host CALM1; this interaction induces a conformational change in the Matrix protein, triggering exposure of the myristate group. Interacts with host AP3D1; this interaction allows the polyprotein trafficking to multivesicular bodies during virus assembly. Part of the pre-integration complex (PIC) which is composed of viral genome, matrix protein, Vpr and integrase. In terms of assembly, homodimer; the homodimer further multimerizes as homohexamers or homopentamers. Interacts with human PPIA/CYPA; This interaction stabilizes the capsid. Interacts with human NUP153. Interacts with host PDZD8; this interaction stabilizes the capsid. Interacts with monkey TRIM5; this interaction destabilizes the capsid. As to quaternary structure, homodimer, whose active site consists of two apposed aspartic acid residues. Heterodimer of p66 RT and p51 RT (RT p66/p51). Heterodimerization of RT is essential for DNA polymerase activity. The overall folding of the subdomains is similar in p66 RT and p51 RT but the spatial arrangements of the subdomains are dramatically different. In terms of assembly, homotetramer; may further associate as a homohexadecamer. Part of the pre-integration complex (PIC) which is composed of viral genome, matrix protein, Vpr and integrase. Interacts with human SMARCB1/INI1 and human PSIP1/LEDGF isoform 1. Interacts with human KPNA3; this interaction might play a role in nuclear import of the pre-integration complex. Interacts with human NUP153; this interaction might play a role in nuclear import of the pre-integration complex. Mg(2+) is required as a cofactor. Specific enzymatic cleavages by the viral protease yield mature proteins. The protease is released by autocatalytic cleavage. The polyprotein is cleaved during and after budding, this process is termed maturation. Proteolytic cleavage of p66 RT removes the RNase H domain to yield the p51 RT subunit. Nucleocapsid protein p7 might be further cleaved after virus entry. Post-translationally, tyrosine phosphorylated presumably in the virion by a host kinase. Phosphorylation is apparently not a major regulator of membrane association. In terms of processing, phosphorylated possibly by host MAPK1; this phosphorylation is necessary for Pin1-mediated virion uncoating. Methylated by host PRMT6, impairing its function by reducing RNA annealing and the initiation of reverse transcription.

The protein localises to the host cell membrane. It localises to the host endosome. It is found in the host multivesicular body. Its subcellular location is the virion membrane. The protein resides in the host nucleus. The protein localises to the host cytoplasm. It localises to the virion. The catalysed reaction is Specific for a P1 residue that is hydrophobic, and P1' variable, but often Pro.. The enzyme catalyses Endohydrolysis of RNA in RNA/DNA hybrids. Three different cleavage modes: 1. sequence-specific internal cleavage of RNA. Human immunodeficiency virus type 1 and Moloney murine leukemia virus enzymes prefer to cleave the RNA strand one nucleotide away from the RNA-DNA junction. 2. RNA 5'-end directed cleavage 13-19 nucleotides from the RNA end. 3. DNA 3'-end directed cleavage 15-20 nucleotides away from the primer terminus.. It catalyses the reaction 3'-end directed exonucleolytic cleavage of viral RNA-DNA hybrid.. It carries out the reaction DNA(n) + a 2'-deoxyribonucleoside 5'-triphosphate = DNA(n+1) + diphosphate. Protease: The viral protease is inhibited by many synthetic protease inhibitors (PIs), such as amprenavir, atazanavir, indinavir, loprinavir, nelfinavir, ritonavir and saquinavir. Use of protease inhibitors in tritherapy regimens permit more ambitious therapeutic strategies. Reverse transcriptase/ribonuclease H: RT can be inhibited either by nucleoside RT inhibitors (NRTIs) or by non nucleoside RT inhibitors (NNRTIs). NRTIs act as chain terminators, whereas NNRTIs inhibit DNA polymerization by binding a small hydrophobic pocket near the RT active site and inducing an allosteric change in this region. Classical NRTIs are abacavir, adefovir (PMEA), didanosine (ddI), lamivudine (3TC), stavudine (d4T), tenofovir (PMPA), zalcitabine (ddC), and zidovudine (AZT). Classical NNRTIs are atevirdine (BHAP U-87201E), delavirdine, efavirenz (DMP-266), emivirine (I-EBU), and nevirapine (BI-RG-587). The tritherapies used as a basic effective treatment of AIDS associate two NRTIs and one NNRTI. In terms of biological role, mediates, with Gag polyprotein, the essential events in virion assembly, including binding the plasma membrane, making the protein-protein interactions necessary to create spherical particles, recruiting the viral Env proteins, and packaging the genomic RNA via direct interactions with the RNA packaging sequence (Psi). Gag-Pol polyprotein may regulate its own translation, by the binding genomic RNA in the 5'-UTR. At low concentration, the polyprotein would promote translation, whereas at high concentration, the polyprotein would encapsidate genomic RNA and then shut off translation. Its function is as follows. Targets the polyprotein to the plasma membrane via a multipartite membrane-binding signal, that includes its myristoylated N-terminus. Matrix protein is part of the pre-integration complex. Implicated in the release from host cell mediated by Vpu. Binds to RNA. Forms the conical core that encapsulates the genomic RNA-nucleocapsid complex in the virion. Most core are conical, with only 7% tubular. The core is constituted by capsid protein hexamer subunits. The core is disassembled soon after virion entry. Host restriction factors such as TRIM5-alpha or TRIMCyp bind retroviral capsids and cause premature capsid disassembly, leading to blocks in reverse transcription. Capsid restriction by TRIM5 is one of the factors which restricts HIV-1 to the human species. Host PIN1 apparently facilitates the virion uncoating. On the other hand, interactions with PDZD8 or CYPA stabilize the capsid. Functionally, encapsulates and protects viral dimeric unspliced genomic RNA (gRNA). Binds these RNAs through its zinc fingers. Acts as a nucleic acid chaperone which is involved in rearangement of nucleic acid secondary structure during gRNA retrotranscription. Also facilitates template switch leading to recombination. As part of the polyprotein, participates in gRNA dimerization, packaging, tRNA incorporation and virion assembly. In terms of biological role, aspartyl protease that mediates proteolytic cleavages of Gag and Gag-Pol polyproteins during or shortly after the release of the virion from the plasma membrane. Cleavages take place as an ordered, step-wise cascade to yield mature proteins. This process is called maturation. Displays maximal activity during the budding process just prior to particle release from the cell. Also cleaves Nef and Vif, probably concomitantly with viral structural proteins on maturation of virus particles. Hydrolyzes host EIF4GI and PABP1 in order to shut off the capped cellular mRNA translation. The resulting inhibition of cellular protein synthesis serves to ensure maximal viral gene expression and to evade host immune response. Also mediates cleavage of host YTHDF3. Mediates cleavage of host CARD8, thereby activating the CARD8 inflammasome, leading to the clearance of latent HIV-1 in patient CD4(+) T-cells after viral reactivation; in contrast, HIV-1 can evade CARD8-sensing when its protease remains inactive in infected cells prior to viral budding. Its function is as follows. Multifunctional enzyme that converts the viral RNA genome into dsDNA in the cytoplasm, shortly after virus entry into the cell. This enzyme displays a DNA polymerase activity that can copy either DNA or RNA templates, and a ribonuclease H (RNase H) activity that cleaves the RNA strand of RNA-DNA heteroduplexes in a partially processive 3' to 5' endonucleasic mode. Conversion of viral genomic RNA into dsDNA requires many steps. A tRNA(3)-Lys binds to the primer-binding site (PBS) situated at the 5'-end of the viral RNA. RT uses the 3' end of the tRNA primer to perform a short round of RNA-dependent minus-strand DNA synthesis. The reading proceeds through the U5 region and ends after the repeated (R) region which is present at both ends of viral RNA. The portion of the RNA-DNA heteroduplex is digested by the RNase H, resulting in a ssDNA product attached to the tRNA primer. This ssDNA/tRNA hybridizes with the identical R region situated at the 3' end of viral RNA. This template exchange, known as minus-strand DNA strong stop transfer, can be either intra- or intermolecular. RT uses the 3' end of this newly synthesized short ssDNA to perform the RNA-dependent minus-strand DNA synthesis of the whole template. RNase H digests the RNA template except for two polypurine tracts (PPTs) situated at the 5'-end and near the center of the genome. It is not clear if both polymerase and RNase H activities are simultaneous. RNase H probably can proceed both in a polymerase-dependent (RNA cut into small fragments by the same RT performing DNA synthesis) and a polymerase-independent mode (cleavage of remaining RNA fragments by free RTs). Secondly, RT performs DNA-directed plus-strand DNA synthesis using the PPTs that have not been removed by RNase H as primers. PPTs and tRNA primers are then removed by RNase H. The 3' and 5' ssDNA PBS regions hybridize to form a circular dsDNA intermediate. Strand displacement synthesis by RT to the PBS and PPT ends produces a blunt ended, linear dsDNA copy of the viral genome that includes long terminal repeats (LTRs) at both ends. Catalyzes viral DNA integration into the host chromosome, by performing a series of DNA cutting and joining reactions. This enzyme activity takes place after virion entry into a cell and reverse transcription of the RNA genome in dsDNA. The first step in the integration process is 3' processing. This step requires a complex comprising the viral genome, matrix protein, Vpr and integrase. This complex is called the pre-integration complex (PIC). The integrase protein removes 2 nucleotides from each 3' end of the viral DNA, leaving recessed CA OH's at the 3' ends. In the second step, the PIC enters cell nucleus. This process is mediated through integrase and Vpr proteins, and allows the virus to infect a non dividing cell. This ability to enter the nucleus is specific of lentiviruses, other retroviruses cannot and rely on cell division to access cell chromosomes. In the third step, termed strand transfer, the integrase protein joins the previously processed 3' ends to the 5' ends of strands of target cellular DNA at the site of integration. The 5'-ends are produced by integrase-catalyzed staggered cuts, 5 bp apart. A Y-shaped, gapped, recombination intermediate results, with the 5'-ends of the viral DNA strands and the 3' ends of target DNA strands remaining unjoined, flanking a gap of 5 bp. The last step is viral DNA integration into host chromosome. This involves host DNA repair synthesis in which the 5 bp gaps between the unjoined strands are filled in and then ligated. Since this process occurs at both cuts flanking the HIV genome, a 5 bp duplication of host DNA is produced at the ends of HIV-1 integration. Alternatively, Integrase may catalyze the excision of viral DNA just after strand transfer, this is termed disintegration. The chain is Gag-Pol polyprotein (gag-pol) from Human immunodeficiency virus type 1 group M subtype D (isolate ELI) (HIV-1).